The chain runs to 650 residues: Acetyl-coenzyme A synthetase (650 aa).

Residues 191–194, Thr311, and Asn335 each bind CoA; that span reads RGGR. ATP is bound by residues 387–389, 411–416, Asp501, and Arg516; these read GEP and DTWWQT. CoA is bound at residue Ser524. An ATP-binding site is contributed by Arg527. The Mg(2+) site is built by Val538, His540, and Ile543. Arg585 lines the CoA pocket. Position 610 is an N6-acetyllysine (Lys610).

Belongs to the ATP-dependent AMP-binding enzyme family. It depends on Mg(2+) as a cofactor. In terms of processing, acetylated. Deacetylation by the SIR2-homolog deacetylase activates the enzyme.

The enzyme catalyses acetate + ATP + CoA = acetyl-CoA + AMP + diphosphate. Its function is as follows. Catalyzes the conversion of acetate into acetyl-CoA (AcCoA), an essential intermediate at the junction of anabolic and catabolic pathways. AcsA undergoes a two-step reaction. In the first half reaction, AcsA combines acetate with ATP to form acetyl-adenylate (AcAMP) intermediate. In the second half reaction, it can then transfer the acetyl group from AcAMP to the sulfhydryl group of CoA, forming the product AcCoA. The protein is Acetyl-coenzyme A synthetase of Vibrio vulnificus (strain YJ016).